Consider the following 247-residue polypeptide: ATP synthase delta chain, chloroplastic (247 aa).

Residues 1 to 60 constitute a chloroplast transit peptide; it reads MAALRLASFTLRPAAAAAASASSGATPAAPRSASFARAARGLPSLRLAPPRRRGDLVRPR.

Belongs to the ATPase delta chain family. In terms of assembly, F-type ATPases have 2 components, CF(1) - the catalytic core - and CF(0) - the membrane proton channel. CF(1) has five subunits: alpha(3), beta(3), gamma(1), delta(1), epsilon(1). CF(0) has three main subunits: a, b and c.

The protein localises to the plastid. It localises to the chloroplast thylakoid membrane. This protein seems to be part of the stalk that links CF(0) to CF(1). It either transmits conformational changes from CF(0) into CF(1) or is implicated in proton conduction. The polypeptide is ATP synthase delta chain, chloroplastic (ATPD) (Sorghum bicolor (Sorghum)).